The following is a 1396-amino-acid chain: Melanoma inhibitory activity protein 2 (1396 aa).

A signal peptide spans 1–22 (MAEVSVQRILLLVVSLAKCLEG). Over 23 to 604 (TKLLAHLKKC…YGFMSSALSP (582 aa)) the chain is Lumenal. An SH3 domain is found at 39–101 (TLISRVLALR…PRDAVEIEEV (63 aa)). Residue Asn-59 is glycosylated (N-linked (GlcNAc...) asparagine). Disordered regions lie at residues 197–288 (EGAG…VPDE) and 331–361 (ESNPPLQDIPSSVPPDEEVPAPCREISTDKE). Positions 243–258 (SDTEPTQELALEEESD) are enriched in acidic residues. The N-linked (GlcNAc...) asparagine glycan is linked to Asn-366. Disordered regions lie at residues 396 to 421 (DKGENEDGEVDNLKHPIGSDFDPEKE) and 525 to 557 (PMEEHEGVHFKPSSSKRNEDDSNSWADPEELSV). Residues 605 to 625 (IEILLESVVAALPEDMRADFN) lie within the membrane without spanning it. Over 626–628 (PSG) the chain is Lumenal. Residues 629 to 649 (FSLELAVCVLSVGLLAVVLFL) form a helical membrane-spanning segment. Residues 650 to 1396 (WRGFRSIRSR…AADPPETQEA (747 aa)) are Cytoplasmic-facing. The tract at residues 651–1243 (RGFRSIRSRF…RSYNMPSLDK (593 aa)) is mediates interaction with MIA3. Coiled coils occupy residues 693–867 (YEGL…LVTS) and 914–1082 (AAKL…NRQK). Residues 1103-1396 (PNTAFGREHS…AADPPETQEA (294 aa)) are disordered. The proline-rich domain (PRD); probably mediates interaction with COPII coat subunits stretch occupies residues 1105 to 1396 (TAFGREHSPY…AADPPETQEA (292 aa)). The span at 1135–1146 (LLEGPLRLSPLL) shows a compositional bias: low complexity. Over residues 1165–1179 (MNTERGESSYDRLSD) the composition is skewed to basic and acidic residues. The segment covering 1252–1269 (MESSGNGTKDNLGNSNVP) has biased composition (polar residues). Pro residues-rich tracts occupy residues 1331 to 1342 (RDFPGPPLPPFP) and 1351 to 1368 (GFPPYLPPRAGFFPPPPH).

It belongs to the MIA/OTOR family. In terms of assembly, interacts with MIA3. Interacts with the COPII coat subunits SEC23A, SEC23B and maybe SEC24C. Interacts with PREB; recruits PREB to endoplasmic reticulum exit sites. Interacts with APOB. Isoform 1 is expressed in liver (at protein level). Isoform 2 is highly expressed in liver and weakly in testis.

The protein localises to the endoplasmic reticulum membrane. Its function is as follows. Plays a role in the transport of cargos that are too large to fit into COPII-coated vesicles and require specific mechanisms to be incorporated into membrane-bound carriers and exported from the endoplasmic reticulum. Plays a role in the secretion of lipoproteins, pre-chylomicrons and pre-VLDLs, by participating in their export from the endoplasmic reticulum. Thereby, may play a role in cholesterol and triglyceride homeostasis. Required for collagen VII (COL7A1) secretion by loading COL7A1 into transport carriers and recruiting PREB/SEC12 at the endoplasmic reticulum exit sites. In Mus musculus (Mouse), this protein is Melanoma inhibitory activity protein 2.